The following is a 453-amino-acid chain: tRNA-2-methylthio-N(6)-dimethylallyladenosine synthase (453 aa).

The 117-residue stretch at 21 to 137 (RGVYISTYGC…LPQLVAKSFA (117 aa)) folds into the MTTase N-terminal domain. Positions 30, 66, 100, 174, 178, and 181 each coordinate [4Fe-4S] cluster. One can recognise a Radical SAM core domain in the interval 160–389 (RNPGVATYVN…FDVHEAMAFE (230 aa)). Positions 392 to 453 (KRYEGTTMKV…FPAVFRGEMI (62 aa)) constitute a TRAM domain.

Belongs to the methylthiotransferase family. MiaB subfamily. In terms of assembly, monomer. [4Fe-4S] cluster is required as a cofactor.

Its subcellular location is the cytoplasm. The catalysed reaction is N(6)-dimethylallyladenosine(37) in tRNA + (sulfur carrier)-SH + AH2 + 2 S-adenosyl-L-methionine = 2-methylsulfanyl-N(6)-dimethylallyladenosine(37) in tRNA + (sulfur carrier)-H + 5'-deoxyadenosine + L-methionine + A + S-adenosyl-L-homocysteine + 2 H(+). Its function is as follows. Catalyzes the methylthiolation of N6-(dimethylallyl)adenosine (i(6)A), leading to the formation of 2-methylthio-N6-(dimethylallyl)adenosine (ms(2)i(6)A) at position 37 in tRNAs that read codons beginning with uridine. This is tRNA-2-methylthio-N(6)-dimethylallyladenosine synthase from Bdellovibrio bacteriovorus (strain ATCC 15356 / DSM 50701 / NCIMB 9529 / HD100).